An 892-amino-acid polypeptide reads, in one-letter code: DNA mismatch repair protein MutS (892 aa).

607–614 lines the ATP pocket; it reads GPNMSGKS. Positions 826–854 are disordered; it reads ETKAETEEESQLSFFGGEQSSKKQDKPVL. The span at 845-854 shows a compositional bias: basic and acidic residues; that stretch reads SSKKQDKPVL.

This sequence belongs to the DNA mismatch repair MutS family.

This protein is involved in the repair of mismatches in DNA. It is possible that it carries out the mismatch recognition step. This protein has a weak ATPase activity. The protein is DNA mismatch repair protein MutS of Bacillus cereus (strain AH187).